A 568-amino-acid chain; its full sequence is Protein phosphatase 1 regulatory inhibitor subunit 16B (568 aa).

Residues 15–55 adopt a coiled-coil conformation; the sequence is EKVPTLERLRAAQKRRAQQLKKWAQYEQDLLHRKRKHERKR. Phosphoserine is present on Ser69. 4 ANK repeats span residues 100–129, 133–162, 228–257, and 261–290; these read DGLT…NVNA, ELWT…DLLA, QGAT…RVDV, and DGWE…SLSA. Residues Ser333, Ser337, and Ser350 each carry the phosphoserine modification. A disordered region spans residues 373 to 403; sequence SAAEDQRTSTYNGDIRETRTDQENKDPNPRL. Basic and acidic residues predominate over residues 386 to 403; that stretch reads DIRETRTDQENKDPNPRL. Position 477 is a phosphoserine (Ser477). Positions 505-517 are enriched in low complexity; it reads SSVARSGESSSEG. The interval 505 to 527 is disordered; sequence SSVARSGESSSEGKAPLIGGRTS. The stretch at 531-560 is one ANK 5 repeat; it reads SNGTSVYYTVTSGDPPLLKFKAPMEEMEEK. Cys564 is lipidated: S-palmitoyl cysteine. Cys565 carries the post-translational modification Cysteine methyl ester. Cys565 carries S-farnesyl cysteine lipidation. A propeptide spans 566–568 (removed in mature form); the sequence is RIS.

In terms of assembly, interacts with PPP1CA, PPP1CB and MSN. Interacts (via its fourth ankyrin repeat) with the mature dimeric form of RPSA/LAMR1. Interacts with EEF1A1. Interacts with PTEN. Interacts with ECE1. Phosphorylated by PKA and, after PKA priming, by GSK3B. Phosphorylation by GSK3B reduces its association with PP1C and enhances PP1C activity. Dephosphorylation by its associated PP1C results in enhanced association with PP1C, but reduced PP1C activity.

It is found in the cell membrane. The protein localises to the nucleus. The protein resides in the cell projection. Regulator of protein phosphatase 1 (PP1) that acts as a positive regulator of pulmonary endothelial cell (EC) barrier function. Protects the endothelial barrier from lipopolysaccharide (LPS)-induced vascular leakage. Involved in the regulation of the PI3K/AKT signaling pathway. Involved in the regulation of angiogenesis and endothelial cell proliferation through the control of ECE1 dephosphorylation, trafficking and activity. Involved in the regulation of endothelial cell filopodia extension. May be a downstream target for TGF-beta1 signaling cascade in endothelial cells. Involved in PKA-mediated moesin dephosphorylation which is important in EC barrier protection against thrombin stimulation. Promotes the interaction of PPP1CA with RPSA/LAMR1 and in turn facilitates the dephosphorylation of RPSA/LAMR1. Involved in the dephosphorylation of EEF1A1. The sequence is that of Protein phosphatase 1 regulatory inhibitor subunit 16B (Ppp1r16b) from Mus musculus (Mouse).